The sequence spans 82 residues: Small ribosomal subunit protein eS21z (82 aa).

N-acetylmethionine is present on methionine 1.

This sequence belongs to the eukaryotic ribosomal protein eS21 family.

The sequence is that of Small ribosomal subunit protein eS21z (RPS21B) from Arabidopsis thaliana (Mouse-ear cress).